Consider the following 174-residue polypeptide: ATP-dependent protease subunit HslV (174 aa).

Residue Thr-2 is part of the active site. Residues Gly-157, Asp-160, and Thr-163 each coordinate Na(+).

It belongs to the peptidase T1B family. HslV subfamily. As to quaternary structure, a double ring-shaped homohexamer of HslV is capped on each side by a ring-shaped HslU homohexamer. The assembly of the HslU/HslV complex is dependent on binding of ATP.

Its subcellular location is the cytoplasm. It carries out the reaction ATP-dependent cleavage of peptide bonds with broad specificity.. With respect to regulation, allosterically activated by HslU binding. Functionally, protease subunit of a proteasome-like degradation complex believed to be a general protein degrading machinery. This chain is ATP-dependent protease subunit HslV, found in Aliivibrio fischeri (strain MJ11) (Vibrio fischeri).